A 1649-amino-acid chain; its full sequence is Formin-like protein 20 (1649 aa).

The region spanning 1 to 194 (MALFRRFFYK…QYISRRNLGS (194 aa)) is the Phosphatase tensin-type domain. C127 serves as the catalytic Phosphocysteine intermediate. Residues 200–339 (DTPLLLDCLI…FKAEVLFSGA (140 aa)) enclose the C2 tensin-type domain. Disordered stretches follow at residues 416-774 (DCAS…PWKS) and 787-1245 (STSQ…QKKS). A compositionally biased stretch (basic and acidic residues) spans 421-483 (DSNHKHDMHA…RRTVEAKEND (63 aa)). Polar residues-rich tracts occupy residues 500-513 (LESM…SLNK) and 585-597 (RINS…TTSL). A compositionally biased stretch (basic and acidic residues) spans 598–616 (KDGKRATSPDGVIPKDAKT). The segment covering 648–662 (SLPPASPHQAPPPLP) has biased composition (pro residues). Positions 665 to 678 (TSEAKTVLHSSQAV) are enriched in polar residues. Composition is skewed to pro residues over residues 680–691 (SPPPPPPPPPLP), 701–711 (LPPPPPPPPPF), 722–732 (LPPPPPPPPPF), 743–752 (LPPPPPPPLP), and 795–804 (SPTPPPPPPA). Residues 809 to 820 (GQKSSDLQTSQL) are compositionally biased toward polar residues. 3 stretches are compositionally biased toward pro residues: residues 821-832 (PSPPPPPPPPPF), 843-854 (LPPPPPPPPPPF), and 865-874 (LPPPPPPPPW). A compositionally biased stretch (polar residues) spans 878–890 (YASTFETHEACST). 3 stretches are compositionally biased toward pro residues: residues 893 to 904 (SPPPPPPPPPFS), 944 to 960 (PSPP…PPPF), and 968 to 1213 (SPPP…PPPM). Residues 1237–1635 (FGSAAQKKSS…KALKEAEMEK (399 aa)) form the FH2 domain.

The protein belongs to the formin-like family. Class-II subfamily.

This chain is Formin-like protein 20 (FH20), found in Arabidopsis thaliana (Mouse-ear cress).